Reading from the N-terminus, the 410-residue chain is WD repeat and FYVE domain-containing protein 1 (410 aa).

WD repeat units lie at residues 22–61, 66–105, 112–150, 153–192, 197–236, and 240–279; these read GHQD…QYWP, TMAS…NKMN, AHQN…NMLG, FFSS…CSVI, GHEG…GRTL, and GHHD…EEAP. The FYVE-type zinc-finger motif lies at 281–352; the sequence is WLESDSCQKC…VCDSCYDSIK (72 aa). Residues Cys287, Cys290, Cys314, Cys317, Cys322, Cys325, Cys344, and Cys347 each contribute to the Zn(2+) site. Residues 364–403 form a WD 7 repeat; it reads EGKHNISHMSMDVARGLMVTCGTDRVVKIWDMTPVVGCSL. At Ser408 the chain carries Phosphoserine.

As to quaternary structure, binds PtdIns3P in vitro with high specificity over other phosphoinositides. Interacts (via WD repeat 2) with tyrosine-phosphorylated TLR3 (via TIR domain) in response to poly(I:C). Interacts with TLR4 in response to LPS. Interacts with TICAM1 in response to poly(I:C).

Its subcellular location is the early endosome. Functionally, positively regulates TLR3- and TLR4-mediated signaling pathways by bridging the interaction between TLR3 or TLR4 and TICAM1. Promotes TLR3/4 ligand-induced activation of transcription factors IRF3 and NF-kappa-B, as well as the production of IFN-beta and inflammatory cytokines. This Bos taurus (Bovine) protein is WD repeat and FYVE domain-containing protein 1 (WDFY1).